The primary structure comprises 855 residues: MRAREIERNCPNLWKWGIMLLGILMICSAADNLWVTVYYGVPVWKEATTTLFCASDAKSYKTEAHNIWATHACVPTDPNPQEIELENVTENFNMWRNNMVEQIHEDIISLWDQSLKPCVKLTPLCVTLNCTDESDEWMGNVTGKNVTEDIRMKNCSFNITTVVRDKTKQVHALFYRLDIVPIDNDNSTNSTNYRLINCNTSAITQACPKVSFEPIPIHYCAPAGFAILKCRDKRFNGTGPCTNVSTVQCTHGIRPVVSTQLLLNGSLAEEEIIIRSENLTNNAKIIIVQLNESVAINCTRPYKNTRQSTPIGLGQALYTTRGRTKIIGQAHCNISKEDWNKTLQRVAIKLGNLLNKTTIIFKPSSGGDAEITTHSFNCGGEFFYCNTSGLFNSTWNINNSEGANSTESDNKLITLQCRIKQIINMWQGVGKAMYAPPIEGQINCSSNITGLLLTRDGGTNNSSNETFRPGGGDMRDNWRSELYKYKVVKIEPLGVAPTKAKRRVVEREKRAIGLGAMFLGFLGAAGSTMGAASVTLTVQARQLMSGIVQQQNNLLRAIEAQQHLLQLTVWGIKQLQARILAVERYLKDQQLLGIWGCSGKLICTTTVPWNSSWSNRSLNDIWQNMTWMEWEREIDNYTGLIYRLIEESQTQQEKNEQELLELDKWASLWNWFNITQWLWYIKIFIMIVGGLIGLRIVFAVLSLVNRVRQGYSPLSFQTLLPAPREPDRPEGIEEEGGERGRDRSIRLVNGFSALIWDDLRNLCLFSYHRLRDLILIAARIVELLGRRGWEALKYLWNLLQYWSRELRNSASSLLDTIAIAVAEGTDRVIEIVRRTYRAVLNVPTRIRQGLERLLL.

An N-terminal signal peptide occupies residues M1–D31. At N32 to I683 the chain is on the extracellular side. C53 and C73 are disulfide-bonded. 15 N-linked (GlcNAc...) asparagine; by host glycosylation sites follow: N87, N129, N140, N145, N154, N158, N186, N189, N199, N236, N243, N264, N278, N291, and N297. Intrachain disulfides connect C118–C207, C125–C198, C130–C155, C220–C249, and C230–C241. A V1 region spans residues C130 to N154. The tract at residues C155–C198 is V2. The V3 stretch occupies residues C298–H331. A disulfide bond links C298 and C332. N333, N340, and N355 each carry an N-linked (GlcNAc...) asparagine; by host glycan. Residues S364–H374 are CD4-binding loop. 2 disulfides stabilise this stretch: C378–C444 and C385–C417. Residues C385–C417 are V4. Residues N386, N392, N398, N404, N443, N447, N460, N461, and N464 are each glycosylated (N-linked (GlcNAc...) asparagine; by host). V5 stretches follow at residues T459 to G470 and S462 to G470. The tract at residues A511–A531 is fusion peptide. Residues K573–L591 form an immunosuppression region. An intrachain disulfide couples C597 to C603. Residues N610, N615, N624, N636, and N673 are each glycosylated (N-linked (GlcNAc...) asparagine; by host). Positions R632–A666 form a coiled coil. The tract at residues E661–K682 is MPER; binding to GalCer. A helical membrane pass occupies residues F684 to V704. At N705–L855 the chain is on the cytoplasmic side. The short motif at Y711–L714 is the YXXL motif; contains endocytosis signal element. The S-palmitoyl cysteine; by host moiety is linked to residue C763. A Di-leucine internalization motif motif is present at residues L854–L855.

Belongs to the HIV-1 env protein family. The mature envelope protein (Env) consists of a homotrimer of non-covalently associated gp120-gp41 heterodimers. The resulting complex protrudes from the virus surface as a spike. There seems to be as few as 10 spikes on the average virion. Interacts with host CD4, CCR5 and CXCR4. Gp120 also interacts with the C-type lectins CD209/DC-SIGN and CLEC4M/DC-SIGNR (collectively referred to as DC-SIGN(R)). Gp120 and gp41 interact with GalCer. Gp120 interacts with host ITGA4/ITGB7 complex; on CD4+ T-cells, this interaction results in rapid activation of integrin ITGAL/LFA-1, which facilitates efficient cell-to-cell spreading of HIV-1. Gp120 interacts with cell-associated heparan sulfate; this interaction increases virus infectivity on permissive cells and may be involved in infection of CD4- cells. In terms of assembly, the mature envelope protein (Env) consists of a homotrimer of non-covalently associated gp120-gp41 heterodimers. The resulting complex protrudes from the virus surface as a spike. There seems to be as few as 10 spikes on the average virion. Highly glycosylated by host. The high number of glycan on the protein is reffered to as 'glycan shield' because it contributes to hide protein sequence from adaptive immune system. In terms of processing, palmitoylation of the transmembrane protein and of Env polyprotein (prior to its proteolytic cleavage) is essential for their association with host cell membrane lipid rafts. Palmitoylation is therefore required for envelope trafficking to classical lipid rafts, but not for viral replication. Post-translationally, specific enzymatic cleavages in vivo yield mature proteins. Envelope glycoproteins are synthesized as an inactive precursor that is heavily N-glycosylated and processed likely by host cell furin in the Golgi to yield the mature SU and TM proteins. The cleavage site between SU and TM requires the minimal sequence [KR]-X-[KR]-R. About 2 of the 9 disulfide bonds of gp41 are reduced by P4HB/PDI, following binding to CD4 receptor.

The protein localises to the virion membrane. The protein resides in the host cell membrane. Its subcellular location is the host endosome membrane. Its function is as follows. Oligomerizes in the host endoplasmic reticulum into predominantly trimers. In a second time, gp160 transits in the host Golgi, where glycosylation is completed. The precursor is then proteolytically cleaved in the trans-Golgi and thereby activated by cellular furin or furin-like proteases to produce gp120 and gp41. Functionally, attaches the virus to the host lymphoid cell by binding to the primary receptor CD4. This interaction induces a structural rearrangement creating a high affinity binding site for a chemokine coreceptor like CXCR4 and/or CCR5. Acts as a ligand for CD209/DC-SIGN and CLEC4M/DC-SIGNR, which are respectively found on dendritic cells (DCs), and on endothelial cells of liver sinusoids and lymph node sinuses. These interactions allow capture of viral particles at mucosal surfaces by these cells and subsequent transmission to permissive cells. HIV subverts the migration properties of dendritic cells to gain access to CD4+ T-cells in lymph nodes. Virus transmission to permissive T-cells occurs either in trans (without DCs infection, through viral capture and transmission), or in cis (following DCs productive infection, through the usual CD4-gp120 interaction), thereby inducing a robust infection. In trans infection, bound virions remain infectious over days and it is proposed that they are not degraded, but protected in non-lysosomal acidic organelles within the DCs close to the cell membrane thus contributing to the viral infectious potential during DCs' migration from the periphery to the lymphoid tissues. On arrival at lymphoid tissues, intact virions recycle back to DCs' cell surface allowing virus transmission to CD4+ T-cells. In terms of biological role, acts as a class I viral fusion protein. Under the current model, the protein has at least 3 conformational states: pre-fusion native state, pre-hairpin intermediate state, and post-fusion hairpin state. During fusion of viral and target intracellular membranes, the coiled coil regions (heptad repeats) assume a trimer-of-hairpins structure, positioning the fusion peptide in close proximity to the C-terminal region of the ectodomain. The formation of this structure appears to drive apposition and subsequent fusion of viral and target cell membranes. Complete fusion occurs in host cell endosomes and is dynamin-dependent, however some lipid transfer might occur at the plasma membrane. The virus undergoes clathrin-dependent internalization long before endosomal fusion, thus minimizing the surface exposure of conserved viral epitopes during fusion and reducing the efficacy of inhibitors targeting these epitopes. Membranes fusion leads to delivery of the nucleocapsid into the cytoplasm. The protein is Envelope glycoprotein gp160 of Homo sapiens (Human).